The primary structure comprises 232 residues: Caffeoyl-CoA O-methyltransferase (232 aa).

Lys-6 is a binding site for substrate. Residues Thr-48, Glu-70, 72-73, Ser-78, Asp-96, and Ala-125 each bind S-adenosyl-L-methionine; that span reads GV. Asp-148 lines the substrate pocket. Asp-148 provides a ligand contact to a divalent metal cation. Asp-150 serves as a coordination point for S-adenosyl-L-methionine. The a divalent metal cation site is built by Asp-174 and Asn-175. Asn-179 is a substrate binding site.

The protein belongs to the class I-like SAM-binding methyltransferase superfamily. Cation-dependent O-methyltransferase family. CCoAMT subfamily. It depends on a divalent metal cation as a cofactor.

The catalysed reaction is (E)-caffeoyl-CoA + S-adenosyl-L-methionine = (E)-feruloyl-CoA + S-adenosyl-L-homocysteine + H(+). It functions in the pathway aromatic compound metabolism; phenylpropanoid biosynthesis. Methylates caffeoyl-CoA to feruloyl-CoA and 5-hydroxyferuloyl-CoA to sinapoyl-CoA. Plays a role in the synthesis of feruloylated polysaccharides. Involved in the reinforcement of the plant cell wall. Also involved in the responding to wounding or pathogen challenge by the increased formation of cell wall-bound ferulic acid polymers. This Citrus natsudaidai (Natsudaidai orange) protein is Caffeoyl-CoA O-methyltransferase.